Reading from the N-terminus, the 417-residue chain is Spermidine/putrescine import ATP-binding protein PotA (417 aa).

The region spanning 5 to 308 (IILKDLTKVF…PANRFVAQFV (304 aa)) is the ABC transporter domain. 37-44 (GPSGCGKT) is a binding site for ATP. Residues 105–177 (DFNSKIKDNL…TALKCKKINK (73 aa)) form an insert region.

Belongs to the ABC transporter superfamily. Spermidine/putrescine importer (TC 3.A.1.11.1) family. As to quaternary structure, the complex is composed of two ATP-binding proteins (PotA), two transmembrane proteins (PotB and PotC) and a solute-binding protein (PotD).

Its subcellular location is the cell membrane. It carries out the reaction ATP + H2O + polyamine-[polyamine-binding protein]Side 1 = ADP + phosphate + polyamineSide 2 + [polyamine-binding protein]Side 1.. Its function is as follows. Part of the ABC transporter complex PotABCD involved in spermidine/putrescine import. Responsible for energy coupling to the transport system. In Aster yellows witches'-broom phytoplasma (strain AYWB), this protein is Spermidine/putrescine import ATP-binding protein PotA.